The chain runs to 545 residues: Threonine--tRNA ligase catalytic subunit (545 aa).

The interval 139–433 (DHRLIGEKLD…LLEHFKGKLP (295 aa)) is catalytic. 3 residues coordinate Zn(2+): Cys-231, His-282, and His-410.

The protein belongs to the class-II aminoacyl-tRNA synthetase family. As to quaternary structure, homodimer. Probably interacts with its editing subunit. Zn(2+) serves as cofactor.

It localises to the cytoplasm. The catalysed reaction is tRNA(Thr) + L-threonine + ATP = L-threonyl-tRNA(Thr) + AMP + diphosphate + H(+). Catalyzes the attachment of threonine to tRNA(Thr) in a two-step reaction: L-threonine is first activated by ATP to form Thr-AMP and then transferred to the acceptor end of tRNA(Thr). Also activates L-serine and transfers it to tRNA(Thr) but cannot deacylate incorrectly charged amino acid; unlike most archaea the editing function is found in a freestanding protein. The sequence is that of Threonine--tRNA ligase catalytic subunit from Saccharolobus islandicus (strain Y.G.57.14 / Yellowstone #1) (Sulfolobus islandicus).